A 311-amino-acid polypeptide reads, in one-letter code: Coproporphyrin III ferrochelatase 1 (311 aa).

Fe-coproporphyrin III contacts are provided by residues Tyr-12, Arg-29, 45–46, Ser-53, and Tyr-124; that span reads RY. Fe(2+) is bound by residues His-182 and Glu-263.

It belongs to the ferrochelatase family.

The protein resides in the cytoplasm. The catalysed reaction is Fe-coproporphyrin III + 2 H(+) = coproporphyrin III + Fe(2+). Its pathway is porphyrin-containing compound metabolism; protoheme biosynthesis. Functionally, involved in coproporphyrin-dependent heme b biosynthesis. Catalyzes the insertion of ferrous iron into coproporphyrin III to form Fe-coproporphyrin III. This Bacillus cereus (strain ATCC 10987 / NRS 248) protein is Coproporphyrin III ferrochelatase 1.